We begin with the raw amino-acid sequence, 155 residues long: Pathogenesis-related protein STH-2 (155 aa).

Belongs to the BetVI family.

This Solanum tuberosum (Potato) protein is Pathogenesis-related protein STH-2 (STH-2).